A 266-amino-acid polypeptide reads, in one-letter code: 14-3-3 protein homolog (266 aa).

The segment at 154–177 (KQAADQAQESYQKATETAEGHSPA) is disordered. Residues 158–168 (DQAQESYQKAT) show a composition bias toward polar residues.

This sequence belongs to the 14-3-3 family.

This chain is 14-3-3 protein homolog, found in Neospora caninum (Coccidian parasite).